The following is a 609-amino-acid chain: Isopenicillin N epimerase component 1 (609 aa).

185 to 196 lines the AMP pocket; that stretch reads MLSGSGTTGLPK. Residues 545 to 570 form a disordered region; sequence STDNHKHNKVPLRDEGVDPRSMGSKV.

Belongs to the ATP-dependent AMP-binding enzyme family.

It catalyses the reaction isopenicillin N = penicillin N. It functions in the pathway antibiotic biosynthesis; cephalosporin C biosynthesis. Functionally, together with cefD2, catalyzes the reversible isomerization between isopenicillin N and penicillin N. This two-component IPN epimerase system may function by two sequential steps, an activation of isopenicillin N by the acyl-CoA synthase component cefD1, followed by epimerization by the acyl-CoA racemase component cefD2. This is Isopenicillin N epimerase component 1 (cefD1) from Hapsidospora chrysogena (Acremonium chrysogenum).